Reading from the N-terminus, the 297-residue chain is Ribonuclease HIII (297 aa).

An RNase H type-2 domain is found at 81-297; that stretch reads IPIIGTDEVG…NTKKAQALLK (217 aa). A divalent metal cation-binding residues include D87, E88, and D192.

It belongs to the RNase HII family. RnhC subfamily. Mn(2+) serves as cofactor. Mg(2+) is required as a cofactor.

The protein localises to the cytoplasm. It catalyses the reaction Endonucleolytic cleavage to 5'-phosphomonoester.. Endonuclease that specifically degrades the RNA of RNA-DNA hybrids. The sequence is that of Ribonuclease HIII from Streptococcus agalactiae serotype III (strain NEM316).